A 220-amino-acid chain; its full sequence is Ribose-5-phosphate isomerase A (220 aa).

Residues 28–31 (TGST), 81–84 (DGAD), and 94–97 (KGGG) contribute to the substrate site. Glutamate 103 serves as the catalytic Proton acceptor. Residue lysine 121 coordinates substrate.

Belongs to the ribose 5-phosphate isomerase family. Homodimer.

It carries out the reaction aldehydo-D-ribose 5-phosphate = D-ribulose 5-phosphate. The protein operates within carbohydrate degradation; pentose phosphate pathway; D-ribose 5-phosphate from D-ribulose 5-phosphate (non-oxidative stage): step 1/1. Catalyzes the reversible conversion of ribose-5-phosphate to ribulose 5-phosphate. This Shewanella sp. (strain W3-18-1) protein is Ribose-5-phosphate isomerase A.